The chain runs to 119 residues: Ribonuclease P protein component (119 aa).

Belongs to the RnpA family. In terms of assembly, consists of a catalytic RNA component (M1 or rnpB) and a protein subunit.

It catalyses the reaction Endonucleolytic cleavage of RNA, removing 5'-extranucleotides from tRNA precursor.. Its function is as follows. RNaseP catalyzes the removal of the 5'-leader sequence from pre-tRNA to produce the mature 5'-terminus. It can also cleave other RNA substrates such as 4.5S RNA. The protein component plays an auxiliary but essential role in vivo by binding to the 5'-leader sequence and broadening the substrate specificity of the ribozyme. The chain is Ribonuclease P protein component from Salmonella schwarzengrund (strain CVM19633).